Here is a 416-residue protein sequence, read N- to C-terminus: Gamma-glutamyl phosphate reductase (416 aa).

Belongs to the gamma-glutamyl phosphate reductase family.

It is found in the cytoplasm. The catalysed reaction is L-glutamate 5-semialdehyde + phosphate + NADP(+) = L-glutamyl 5-phosphate + NADPH + H(+). It functions in the pathway amino-acid biosynthesis; L-proline biosynthesis; L-glutamate 5-semialdehyde from L-glutamate: step 2/2. Functionally, catalyzes the NADPH-dependent reduction of L-glutamate 5-phosphate into L-glutamate 5-semialdehyde and phosphate. The product spontaneously undergoes cyclization to form 1-pyrroline-5-carboxylate. In Vibrio vulnificus (strain CMCP6), this protein is Gamma-glutamyl phosphate reductase.